The sequence spans 102 residues: NADH-quinone oxidoreductase subunit K 2 (102 aa).

Transmembrane regions (helical) follow at residues 6-26 (LEAF…GIIA), 30-50 (LVTV…ALVG), and 66-86 (FIIA…IAIF).

It belongs to the complex I subunit 4L family. NDH-1 is composed of 14 different subunits. Subunits NuoA, H, J, K, L, M, N constitute the membrane sector of the complex.

It is found in the cell inner membrane. The catalysed reaction is a quinone + NADH + 5 H(+)(in) = a quinol + NAD(+) + 4 H(+)(out). Its function is as follows. NDH-1 shuttles electrons from NADH, via FMN and iron-sulfur (Fe-S) centers, to quinones in the respiratory chain. The immediate electron acceptor for the enzyme in this species is believed to be ubiquinone. Couples the redox reaction to proton translocation (for every two electrons transferred, four hydrogen ions are translocated across the cytoplasmic membrane), and thus conserves the redox energy in a proton gradient. This chain is NADH-quinone oxidoreductase subunit K 2, found in Aquifex aeolicus (strain VF5).